We begin with the raw amino-acid sequence, 381 residues long: cAMP-dependent protein kinase type I-alpha regulatory subunit (381 aa).

At M1 the chain carries N-acetylmethionine. Residues 1 to 135 (MESGSTAASE…AALAKAIEKN (135 aa)) form a dimerization and phosphorylation region. S3 carries the post-translational modification Phosphoserine. Residues 64-96 (QIQNLQKAGTRTDSREDEISPPPPNPVVKGRRR) form a disordered region. Position 75 is a phosphothreonine (T75). S77 and S83 each carry phosphoserine. A Pseudophosphorylation motif motif is present at residues 96 to 100 (RRGAI). The residue at position 101 (S101) is a Phosphoserine. Residues 137-254 (LFSH…SKVS), E202, R211, 255-381 (ILES…SLSV), E326, and R335 each bind 3',5'-cyclic AMP. S258 bears the Phosphoserine mark.

Belongs to the cAMP-dependent kinase regulatory chain family. The inactive holoenzyme is composed of two regulatory chains and two catalytic chains. Activation by cAMP releases the two active catalytic monomers and the regulatory dimer. Interacts with PRKACA and PRKACB. PRKAR1A also interacts with RFC2; the complex may be involved in cell survival. Interacts with AKAP4. Interacts with RARA; the interaction occurs in the presence of cAMP or FSH and regulates RARA transcriptional activity. Interacts with the phosphorylated form of PJA2. Interacts with CBFA2T3. Interacts with PRKX; regulates this cAMP-dependent protein kinase. Interacts with smAKAP; this interaction may target PRKAR1A to the plasma membrane. Interacts with AICDA. The pseudophosphorylation site binds to the substrate-binding region of the catalytic chain, resulting in the inhibition of its activity.

It is found in the cell membrane. In terms of biological role, regulatory subunit of the cAMP-dependent protein kinases involved in cAMP signaling in cells. The chain is cAMP-dependent protein kinase type I-alpha regulatory subunit (PRKAR1A) from Pongo abelii (Sumatran orangutan).